We begin with the raw amino-acid sequence, 331 residues long: Probable mannose-1-phosphate guanylyltransferase 3 (331 aa).

Lys3 is a diphosphate binding site. GDP-alpha-D-mannose-binding residues include Gly66, Asn90, Asp92, Gly127, and Asn154.

Belongs to the transferase hexapeptide repeat family.

The catalysed reaction is alpha-D-mannose 1-phosphate + GTP + H(+) = GDP-alpha-D-mannose + diphosphate. It participates in nucleotide-sugar biosynthesis; GDP-alpha-D-mannose biosynthesis; GDP-alpha-D-mannose from alpha-D-mannose 1-phosphate (GTP route): step 1/1. Functionally, catalyzes a reaction of the Smirnoff-Wheeler pathway, the major route to ascorbate biosynthesis in plants. In Arabidopsis thaliana (Mouse-ear cress), this protein is Probable mannose-1-phosphate guanylyltransferase 3.